The following is an 857-amino-acid chain: Leucine--tRNA ligase (857 aa).

The short motif at 42 to 52 (PYPSGRLHMGH) is the 'HIGH' region element. The 'KMSKS' region motif lies at 617–621 (KMSKS). Residue Lys-620 coordinates ATP.

The protein belongs to the class-I aminoacyl-tRNA synthetase family.

The protein resides in the cytoplasm. It catalyses the reaction tRNA(Leu) + L-leucine + ATP = L-leucyl-tRNA(Leu) + AMP + diphosphate. This chain is Leucine--tRNA ligase, found in Vibrio vulnificus (strain CMCP6).